We begin with the raw amino-acid sequence, 454 residues long: tRNA-2-methylthio-N(6)-dimethylallyladenosine synthase (454 aa).

The region spanning 6 to 122 is the MTTase N-terminal domain; it reads RHYHITTFGC…LKDLLESVFD (117 aa). Residues Cys15, Cys51, Cys85, Cys157, Cys161, and Cys164 each coordinate [4Fe-4S] cluster. In terms of domain architecture, Radical SAM core spans 143–381; sequence RDSKVTAWVN…HLGNLKVAER (239 aa). The TRAM domain maps to 383-447; the sequence is QRYFGRIEEV…PFSLTGQPVE (65 aa).

Belongs to the methylthiotransferase family. MiaB subfamily. As to quaternary structure, monomer. [4Fe-4S] cluster serves as cofactor.

Its subcellular location is the cytoplasm. The enzyme catalyses N(6)-dimethylallyladenosine(37) in tRNA + (sulfur carrier)-SH + AH2 + 2 S-adenosyl-L-methionine = 2-methylsulfanyl-N(6)-dimethylallyladenosine(37) in tRNA + (sulfur carrier)-H + 5'-deoxyadenosine + L-methionine + A + S-adenosyl-L-homocysteine + 2 H(+). In terms of biological role, catalyzes the methylthiolation of N6-(dimethylallyl)adenosine (i(6)A), leading to the formation of 2-methylthio-N6-(dimethylallyl)adenosine (ms(2)i(6)A) at position 37 in tRNAs that read codons beginning with uridine. This chain is tRNA-2-methylthio-N(6)-dimethylallyladenosine synthase, found in Nostoc punctiforme (strain ATCC 29133 / PCC 73102).